We begin with the raw amino-acid sequence, 396 residues long: Subtilisin-like protease 5 (396 aa).

The first 20 residues, 1-20, serve as a signal peptide directing secretion; that stretch reads MTGFFTFLSFSLAALSVTNA. Residues 21 to 116 constitute a propeptide that is removed on maturation; the sequence is AHILSVPKGA…VEPDAIISQH (96 aa). The region spanning 37-113 is the Inhibitor I9 domain; that stretch reads YIVVMKDDTS…VAFVEPDAII (77 aa). A glycan (N-linked (GlcNAc...) asparagine) is linked at asparagine 63. The Peptidase S8 domain occupies 125–396; it reads PWGLSRLSNR…SRLLYNGSGR (272 aa). Catalysis depends on charge relay system residues aspartate 156 and histidine 187. Residues asparagine 230 and asparagine 248 are each glycosylated (N-linked (GlcNAc...) asparagine). The Charge relay system role is filled by serine 342. The segment covering 376-389 has biased composition (polar residues); sequence PTIRNPGPDTTSRL. The segment at 376 to 396 is disordered; it reads PTIRNPGPDTTSRLLYNGSGR. Asparagine 392 is a glycosylation site (N-linked (GlcNAc...) asparagine).

Belongs to the peptidase S8 family.

It is found in the secreted. Secreted subtilisin-like serine protease with keratinolytic activity that contributes to pathogenicity. This chain is Subtilisin-like protease 5 (SUB5), found in Trichophyton tonsurans (Scalp ringworm fungus).